The sequence spans 248 residues: NAD-dependent protein deacylase 2 (248 aa).

A Deacetylase sirtuin-type domain is found at 1 to 248 (MLQAASALRH…HVMAELISHI (248 aa)). NAD(+) is bound by residues 19 to 38 (GAGL…GGLY) and 102 to 105 (QNVD). Residue histidine 122 is the Proton acceptor of the active site. 4 residues coordinate Zn(2+): cysteine 130, cysteine 133, cysteine 152, and cysteine 155. Residues 193–195 (GTT), 219–221 (NPQ), and alanine 237 contribute to the NAD(+) site.

It belongs to the sirtuin family. Class III subfamily. Requires Zn(2+) as cofactor.

The protein localises to the cytoplasm. The enzyme catalyses N(6)-acetyl-L-lysyl-[protein] + NAD(+) + H2O = 2''-O-acetyl-ADP-D-ribose + nicotinamide + L-lysyl-[protein]. Functionally, NAD-dependent protein deacetylase which modulates the activities of several proteins which are inactive in their acetylated form. This chain is NAD-dependent protein deacylase 2 (cobB2), found in Pseudomonas syringae pv. tomato (strain ATCC BAA-871 / DC3000).